The primary structure comprises 541 residues: Membrane protein insertase YidC (541 aa).

Transmembrane regions (helical) follow at residues 7–27 (LLFM…QVDY), 345–365 (LVQN…AVLY), 415–435 (LGGC…YWTF), 453–473 (LSAQ…MFLL), and 492–512 (FMPL…VLYW).

Belongs to the OXA1/ALB3/YidC family. Type 1 subfamily. Interacts with the Sec translocase complex via SecD. Specifically interacts with transmembrane segments of nascent integral membrane proteins during membrane integration.

Its subcellular location is the cell inner membrane. Functionally, required for the insertion and/or proper folding and/or complex formation of integral membrane proteins into the membrane. Involved in integration of membrane proteins that insert both dependently and independently of the Sec translocase complex, as well as at least some lipoproteins. Aids folding of multispanning membrane proteins. The polypeptide is Membrane protein insertase YidC (Histophilus somni (strain 2336) (Haemophilus somnus)).